A 228-amino-acid polypeptide reads, in one-letter code: Small ribosomal subunit protein uS3 (228 aa).

The KH type-2 domain maps to 39–107 (VREYLQDKLK…PVHINIEEIR (69 aa)).

This sequence belongs to the universal ribosomal protein uS3 family. Part of the 30S ribosomal subunit. Forms a tight complex with proteins S10 and S14.

Its function is as follows. Binds the lower part of the 30S subunit head. Binds mRNA in the 70S ribosome, positioning it for translation. The protein is Small ribosomal subunit protein uS3 of Pseudomonas aeruginosa (strain UCBPP-PA14).